Consider the following 467-residue polypeptide: Retinoic acid receptor RXR-alpha (467 aa).

The interval 1-112 is disordered; that stretch reads MDTKHFLPLD…MNPVSSTEDI (112 aa). The modulating domain stretch occupies residues 1 to 139; the sequence is MDTKHFLPLD…GNMASFTKHI (139 aa). Residue Lys4 forms a Glycyl lysine isopeptide (Lys-Gly) (interchain with G-Cter in SUMO2) linkage. Residues 11–25 are compositionally biased toward polar residues; it reads FSTQVNSSSLNSPTG. Ser22 and Ser28 each carry phosphoserine. Positions 32–52 are enriched in low complexity; sequence PSLHPSLGPGIGSPLGSPGQL. Residues 54–63 show a composition bias toward polar residues; that stretch reads SPISTLSSPI. Phosphoserine; by MAPK8 and MAPK9 is present on residues Ser61 and Ser75. Polar residues predominate over residues 83–109; it reads SVPTTPTLGFGTGSPQLNSPMNPVSST. Position 87 is a phosphothreonine; by MAPK8 and MAPK9 (Thr87). Residue Lys113 forms a Glycyl lysine isopeptide (Lys-Gly) (interchain with G-Cter in SUMO) linkage. Ser134 is subject to Phosphoserine. Cys140 and Cys143 together coordinate Zn(2+). Residues 140–160 form an NR C4-type zinc finger; the sequence is CAICGDRSSGKHYGVYSCEGC. Residues 140-205 constitute a DNA-binding region (nuclear receptor); it reads CAICGDRSSG…RYQKCLAMGM (66 aa). Lys150 carries the post-translational modification N6-acetyllysine. 2 residues coordinate Zn(2+): Cys157 and Cys160. The segment at 165 to 170 is nuclear localization signal; it reads KRTVRK. Zn(2+) contacts are provided by Cys176, Cys182, Cys192, and Cys195. Residues 176–200 form an NR C4-type zinc finger; sequence CRDNKDCLIDKRQRNRCQYCRYQKC. Residues 206-229 are hinge; it reads KREAVQEERQRGKDRNENEVESTS. The span at 211–223 shows a compositional bias: basic and acidic residues; sequence QEERQRGKDRNEN. The interval 211-233 is disordered; sequence QEERQRGKDRNENEVESTSSANE. The NR LBD domain maps to 232 to 463; that stretch reads NEDMPVEKIL…TFLMEMLEAP (232 aa). Phosphoserine is present on Ser264. The residue at position 265 (Ser265) is a Phosphoserine; by MAPK8 and MAPK9. 9-cis-retinoate is bound by residues Arg321 and Ala332. The all-trans-retinoate site is built by Arg321 and Ala332. The interval 353–373 is required for nuclear export; the sequence is RVLTELVSKMRDMQMDKTELG.

Belongs to the nuclear hormone receptor family. NR2 subfamily. As to quaternary structure, homodimer. Heterodimer with RARA; required for ligand-dependent retinoic acid receptor transcriptional activity. Heterodimer with PPARA (via the leucine-like zipper in the LBD); the interaction is required for PPARA transcriptional activity. Heterodimerizes with PPARG. Heterodimerizes (via NR LBD) with RARB. Heterodimerizes with NR1H4; the heterodimerization enhances the binding affinity for LXXLL motifs from coactivators. Interacts with coactivator NCO6. Interacts with coactivator NCO3. Interacts with coactivator FAM120B. Interacts with coactivator PELP1, SENP6, SFPQ, DNTTIP2 and RNF8. Interacts with PRMT2. Interacts with ASXL1. Interacts with BHLHE40/DEC1, BHLHE41/DEC2, NCOR1 and NCOR2. Interacts in a ligand-dependent fashion with MED1 and NCOA1. Interacts with VDR. Interacts with EP300; the interaction is decreased by 9-cis retinoic acid. Heterodimer (via C-terminus) with NR4A1 (via DNA-binding domain); the interaction is enhanced by 9-cis retinoic acid. NR4A1 competes with EP300 for interaction with RXRA and thereby attenuates EP300 mediated acetylation of RXRA. In the absence of hormonal ligand, interacts with TACC1. Interacts ith IGFBP3. Post-translationally, acetylated by EP300; acetylation enhances DNA binding and transcriptional activity. Phosphorylated on serine and threonine residues mainly in the N-terminal modulating domain. Constitutively phosphorylated on Ser-22 in the presence or absence of ligand. Under stress conditions, hyperphosphorylated by activated JNK on Ser-61, Ser-75, Thr-87 and Ser-265. Phosphorylated on Ser-28, in vitro, by PKA. This phosphorylation is required for repression of cAMP-mediated transcriptional activity of RARA. In terms of processing, ubiquitinated by UBR5, leading to its degradation: UBR5 specifically recognizes and binds ligand-bound RXRA when it is not associated with coactivators (NCOAs). In presence of NCOAs, the UBR5-degron is not accessible, preventing its ubiquitination and degradation. Post-translationally, sumoylation negatively regulates transcriptional activity. Desumoylated specifically by SENP6. As to expression, expressed in macrophages (at protein level).

It localises to the nucleus. Its subcellular location is the cytoplasm. It is found in the mitochondrion. Functionally, receptor for retinoic acid that acts as a transcription factor. Forms homo- or heterodimers with retinoic acid receptors (RARs) and binds to target response elements in response to their ligands, all-trans or 9-cis retinoic acid, to regulate gene expression in various biological processes. The RAR/RXR heterodimers bind to the retinoic acid response elements (RARE) composed of tandem 5'-AGGTCA-3' sites known as DR1-DR5 to regulate transcription. The high affinity ligand for retinoid X receptors (RXRs) is 9-cis retinoic acid. In the absence of ligand, the RXR-RAR heterodimers associate with a multiprotein complex containing transcription corepressors that induce histone deacetylation, chromatin condensation and transcriptional suppression. On ligand binding, the corepressors dissociate from the receptors and coactivators are recruited leading to transcriptional activation. Serves as a common heterodimeric partner for a number of nuclear receptors, such as RARA, RARB and PPARA. The RXRA/RARB heterodimer can act as a transcriptional repressor or transcriptional activator, depending on the RARE DNA element context. The RXRA/PPARA heterodimer is required for PPARA transcriptional activity on fatty acid oxidation genes such as ACOX1 and the P450 system genes. Together with RARA, positively regulates microRNA-10a expression, thereby inhibiting the GATA6/VCAM1 signaling response to pulsatile shear stress in vascular endothelial cells. Acts as an enhancer of RARA binding to RARE DNA element. May facilitate the nuclear import of heterodimerization partners such as VDR and NR4A1. Promotes myelin debris phagocytosis and remyelination by macrophages. Plays a role in the attenuation of the innate immune system in response to viral infections, possibly by negatively regulating the transcription of antiviral genes such as type I IFN genes. Involved in the regulation of calcium signaling by repressing ITPR2 gene expression, thereby controlling cellular senescence. In Mus musculus (Mouse), this protein is Retinoic acid receptor RXR-alpha (Rxra).